The chain runs to 136 residues: Large ribosomal subunit protein eL27 (136 aa).

Belongs to the eukaryotic ribosomal protein eL27 family.

This is Large ribosomal subunit protein eL27 (RPL27) from Candida albicans (Yeast).